The chain runs to 82 residues: Mu-conotoxin MrVIA (82 aa).

Residues 1–22 (MKLTCMMIVAVLFLTAWTLVMA) form the signal peptide. Positions 23–49 (DDSNNGLANHFSKSRDEMEDPEASKLE) are excised as a propeptide. Intrachain disulfides connect Cys53–Cys71, Cys60–Cys76, and Cys70–Cys81.

In terms of tissue distribution, expressed by the venom duct.

The protein resides in the secreted. Its function is as follows. MuO-conotoxins are gating-modifier toxins that inhibit sodium current by trapping the domain II voltage sensor in the closed position to prevent opening of the sodium channel. This toxin inhibits rNav1.2/SCN2A (IC(50)=532 nM), rNav1.4/SCN4A (IC(50)=438 nM) and rNav1.7/SCN9A (IC(50)=345 nM). It blocks Nav channels by interacting mainly with the C-terminal part of the pore loop of domain-3. It does not bind on site 1. At small concentration, this toxin also acts as a calcium current agonist, whereas at higher doses it blocks fast-inactivating calcium current. The polypeptide is Mu-conotoxin MrVIA (Conus marmoreus (Marble cone)).